Reading from the N-terminus, the 95-residue chain is Putative pterin-4-alpha-carbinolamine dehydratase (95 aa).

This sequence belongs to the pterin-4-alpha-carbinolamine dehydratase family.

It catalyses the reaction (4aS,6R)-4a-hydroxy-L-erythro-5,6,7,8-tetrahydrobiopterin = (6R)-L-erythro-6,7-dihydrobiopterin + H2O. The polypeptide is Putative pterin-4-alpha-carbinolamine dehydratase (Prochlorococcus marinus (strain NATL2A)).